A 393-amino-acid chain; its full sequence is MSCFKSKFAGKSYFRRTFHSSIIQFHPQLSILIWHRRYSIIRTYELIANAAYIGTPGKGILAADESTGTIGKRFVSINVENVESNRRALRELLFTTPGALQYISGIILFEETLYQKTASGKLFVDVMKEAGVLPGIKVDKGTVELAGTNGETTTTGLDGLGDRCKKYYEAGARFAKWRAVLKIGNNEPSELAIHENAYGLARYAVICQENGLVPIVEPEILVDGSHDIEKCAYVTERVLAACYKALSDHHVILEGTLLKPNMVTPGSDSGSKVKPEVIAKHTVRALQRTVPAAVPAVVFLSGGQSEEEATVNLNAINQLKGKKPWSLTFSYGRALQQSTLKAWGGKEENVDKAQKAFLARAKANSEATLGGYKGDAQLGEGASESLHVKDYKY.

Arg73 is a binding site for substrate. Cys207 is subject to S-glutathionyl cysteine; transient; alternate. Cys207 is modified (S-nitrosocysteine; transient; alternate). Glu217 (proton acceptor) is an active-site residue. Lys259 acts as the Schiff-base intermediate with dihydroxyacetone-P in catalysis. Substrate contacts are provided by residues Ser301–Gly303 and Arg333.

The protein belongs to the class I fructose-bisphosphate aldolase family. As to quaternary structure, homotetramer. Post-translationally, S-glutathionylated at Cys-207. In terms of processing, S-nitrosylated at Cys-207. In terms of tissue distribution, highly expressed in flowers.

It localises to the cytoplasm. Its subcellular location is the cytosol. It catalyses the reaction beta-D-fructose 1,6-bisphosphate = D-glyceraldehyde 3-phosphate + dihydroxyacetone phosphate. The protein operates within carbohydrate degradation; glycolysis; D-glyceraldehyde 3-phosphate and glycerone phosphate from D-glucose: step 4/4. Fructose-bisphosphate aldolase that plays a key role in glycolysis and gluconeogenesis. This chain is Fructose-bisphosphate aldolase 4, cytosolic, found in Arabidopsis thaliana (Mouse-ear cress).